The primary structure comprises 215 residues: Imidazole glycerol phosphate synthase subunit HisH (215 aa).

In terms of domain architecture, Glutamine amidotransferase type-1 spans 3–215 (TAVVFDYGFG…QLLKNWIATL (213 aa)). Catalysis depends on Cys-81, which acts as the Nucleophile. Active-site residues include His-196 and Glu-198.

In terms of assembly, heterodimer of HisH and HisF.

It is found in the cytoplasm. The catalysed reaction is 5-[(5-phospho-1-deoxy-D-ribulos-1-ylimino)methylamino]-1-(5-phospho-beta-D-ribosyl)imidazole-4-carboxamide + L-glutamine = D-erythro-1-(imidazol-4-yl)glycerol 3-phosphate + 5-amino-1-(5-phospho-beta-D-ribosyl)imidazole-4-carboxamide + L-glutamate + H(+). The enzyme catalyses L-glutamine + H2O = L-glutamate + NH4(+). It functions in the pathway amino-acid biosynthesis; L-histidine biosynthesis; L-histidine from 5-phospho-alpha-D-ribose 1-diphosphate: step 5/9. Functionally, IGPS catalyzes the conversion of PRFAR and glutamine to IGP, AICAR and glutamate. The HisH subunit catalyzes the hydrolysis of glutamine to glutamate and ammonia as part of the synthesis of IGP and AICAR. The resulting ammonia molecule is channeled to the active site of HisF. This chain is Imidazole glycerol phosphate synthase subunit HisH, found in Bifidobacterium longum (strain NCC 2705).